The primary structure comprises 545 residues: Probable intron-encoded endonuclease 4 (545 aa).

The next 7 helical transmembrane spans lie at 1-21 (MYLS…FFGR), 30-50 (LITC…FFEV), 81-101 (LTVA…IYSI), 119-139 (LFTF…MFVG), 140-160 (WEGV…RIAA), 177-197 (FLTI…YATV), and 200-220 (LAPY…LIGA). Residues 1 to 239 (MYLSIIILPL…HVWLPMAMEG (239 aa)) form a ndh-5 exons 1 and 2 encoded region. The segment at 240-545 (FFSRAFLKLH…NNINKSDYNK (306 aa)) is ndh-5 intron 2 encoded.

It in the N-terminal section; belongs to the complex I subunit 5 family. The protein in the C-terminal section; belongs to the LAGLIDADG endonuclease family.

The protein resides in the mitochondrion membrane. Mitochondrial DNA endonuclease involved in intron homing. The protein is Probable intron-encoded endonuclease 4 of Neurospora crassa (strain ATCC 24698 / 74-OR23-1A / CBS 708.71 / DSM 1257 / FGSC 987).